We begin with the raw amino-acid sequence, 96 residues long: Large ribosomal subunit protein eL14 (96 aa).

Belongs to the eukaryotic ribosomal protein eL14 family.

In Sulfolobus acidocaldarius (strain ATCC 33909 / DSM 639 / JCM 8929 / NBRC 15157 / NCIMB 11770), this protein is Large ribosomal subunit protein eL14.